A 503-amino-acid polypeptide reads, in one-letter code: ATP synthase subunit alpha (503 aa).

An ATP-binding site is contributed by G169–T176.

Belongs to the ATPase alpha/beta chains family. In terms of assembly, F-type ATPases have 2 components, CF(1) - the catalytic core - and CF(0) - the membrane proton channel. CF(1) has five subunits: alpha(3), beta(3), gamma(1), delta(1), epsilon(1). CF(0) has three main subunits: a(1), b(2) and c(9-12). The alpha and beta chains form an alternating ring which encloses part of the gamma chain. CF(1) is attached to CF(0) by a central stalk formed by the gamma and epsilon chains, while a peripheral stalk is formed by the delta and b chains.

It localises to the cell inner membrane. It carries out the reaction ATP + H2O + 4 H(+)(in) = ADP + phosphate + 5 H(+)(out). Produces ATP from ADP in the presence of a proton gradient across the membrane. The alpha chain is a regulatory subunit. The sequence is that of ATP synthase subunit alpha from Leptospira interrogans serogroup Icterohaemorrhagiae serovar copenhageni (strain Fiocruz L1-130).